A 139-amino-acid polypeptide reads, in one-letter code: MLMPKRVQYRKTQRGRMKGNAQRGTAVTFGSFGLKAMEPAWITSRQIEAARIAMNRYMKRDGKIWIRIFPDKPVSKKPAETRMGSGKGSPEFWVAVVKPGRVMFEADGVPREVAVEAFRLAAKKLPIKTKFIVRPDYEG.

The interval 1–21 (MLMPKRVQYRKTQRGRMKGNA) is disordered. Residues 7-17 (VQYRKTQRGRM) are compositionally biased toward basic residues.

The protein belongs to the universal ribosomal protein uL16 family. As to quaternary structure, part of the 50S ribosomal subunit.

Functionally, binds 23S rRNA and is also seen to make contacts with the A and possibly P site tRNAs. The chain is Large ribosomal subunit protein uL16 from Chlorobaculum tepidum (strain ATCC 49652 / DSM 12025 / NBRC 103806 / TLS) (Chlorobium tepidum).